Consider the following 297-residue polypeptide: tRNA pseudouridine synthase B (297 aa).

The active-site Nucleophile is aspartate 44.

This sequence belongs to the pseudouridine synthase TruB family. Type 1 subfamily.

The catalysed reaction is uridine(55) in tRNA = pseudouridine(55) in tRNA. Responsible for synthesis of pseudouridine from uracil-55 in the psi GC loop of transfer RNAs. The protein is tRNA pseudouridine synthase B of Corynebacterium efficiens (strain DSM 44549 / YS-314 / AJ 12310 / JCM 11189 / NBRC 100395).